We begin with the raw amino-acid sequence, 140 residues long: Nucleoside diphosphate kinase (140 aa).

Positions 11, 59, 87, 93, 104, and 114 each coordinate ATP. Catalysis depends on His-117, which acts as the Pros-phosphohistidine intermediate.

Belongs to the NDK family. In terms of assembly, homotetramer. Mg(2+) serves as cofactor.

It localises to the cytoplasm. It catalyses the reaction a 2'-deoxyribonucleoside 5'-diphosphate + ATP = a 2'-deoxyribonucleoside 5'-triphosphate + ADP. The catalysed reaction is a ribonucleoside 5'-diphosphate + ATP = a ribonucleoside 5'-triphosphate + ADP. Major role in the synthesis of nucleoside triphosphates other than ATP. The ATP gamma phosphate is transferred to the NDP beta phosphate via a ping-pong mechanism, using a phosphorylated active-site intermediate. The chain is Nucleoside diphosphate kinase from Methylocella silvestris (strain DSM 15510 / CIP 108128 / LMG 27833 / NCIMB 13906 / BL2).